The primary structure comprises 137 residues: Small ribosomal subunit protein bS6 (137 aa).

A disordered region spans residues 99-137; it reads LSPMKAAESREDRRSGGDDRPRRSADSEERQSASQDEEE. Positions 105-129 are enriched in basic and acidic residues; that stretch reads AESREDRRSGGDDRPRRSADSEERQ.

The protein belongs to the bacterial ribosomal protein bS6 family.

Its function is as follows. Binds together with bS18 to 16S ribosomal RNA. This Marinobacter nauticus (strain ATCC 700491 / DSM 11845 / VT8) (Marinobacter aquaeolei) protein is Small ribosomal subunit protein bS6.